The chain runs to 258 residues: Gamma-secretase subunit Aph-1b (258 aa).

7 helical membrane passes run 3–23, 32–52, 70–90, 118–138, 161–181, 187–207, and 214–234; these read VAVFFGCTFIAFGPAIALFMF, VIFLIAGAFFWLVSLLLSSLV, GLLIFGVVLSVLLQEAFRYGY, AYVSGLGFGFMSGAFSVVNIL, AFMTLAIILLHMFWGVVFFEA, WWALGAVVASHLVVSCLTFVN, and LIPTYIILSVMAVWAYLCAGG.

Belongs to the APH-1 family. As to quaternary structure, component of the gamma-secretase complex, a complex composed of a presenilin homodimer (PSEN1 or PSEN2), nicastrin (NCSTN), APH1 and PEN2.

It localises to the membrane. Functionally, essential subunit of the gamma-secretase complex, an endoprotease complex that catalyzes the intramembrane cleavage of integral proteins such as Notch receptors. It may represent a stabilizing cofactor for the presenilin homodimer that promotes the formation of a stable complex. The protein is Gamma-secretase subunit Aph-1b (aph1b) of Danio rerio (Zebrafish).